A 204-amino-acid chain; its full sequence is 3-isopropylmalate dehydratase small subunit (204 aa).

Belongs to the LeuD family. LeuD type 1 subfamily. Heterodimer of LeuC and LeuD.

It catalyses the reaction (2R,3S)-3-isopropylmalate = (2S)-2-isopropylmalate. It participates in amino-acid biosynthesis; L-leucine biosynthesis; L-leucine from 3-methyl-2-oxobutanoate: step 2/4. In terms of biological role, catalyzes the isomerization between 2-isopropylmalate and 3-isopropylmalate, via the formation of 2-isopropylmaleate. This Clavibacter michiganensis subsp. michiganensis (strain NCPPB 382) protein is 3-isopropylmalate dehydratase small subunit.